Consider the following 220-residue polypeptide: Large ribosomal subunit protein eL15 (220 aa).

It belongs to the eukaryotic ribosomal protein eL15 family.

In Staphylothermus marinus (strain ATCC 43588 / DSM 3639 / JCM 9404 / F1), this protein is Large ribosomal subunit protein eL15.